The primary structure comprises 426 residues: Cephalotocin receptor 2 (426 aa).

Topologically, residues 1–51 are extracellular; sequence MYQAMEVESTSPSGFFLDFYTQSTIPTTDFLNNTNSSHPIRDEKLVKIEIA. 2 N-linked (GlcNAc...) asparagine glycosylation sites follow: Asn-32 and Asn-35. The chain crosses the membrane as a helical span at residues 52–72; the sequence is VLGTCFTLAIINNLCVLLVLL. The Cytoplasmic portion of the chain corresponds to 73–84; that stretch reads WRRKKVRRMQMF. The helical transmembrane segment at 85–105 threads the bilayer; sequence ILHLSIADLIVAFFNILPQLI. Residues 106–120 are Extracellular-facing; it reads WDITFRFMAGDAMCR. Cys-119 and Cys-198 are oxidised to a cystine. The chain crosses the membrane as a helical span at residues 121 to 141; it reads FIKYAQMFSLYLSTYILIMTA. Over 142–165 the chain is Cytoplasmic; sequence VDRYRAICHPLSNQTWTPCMVYCK. Residues 166–186 traverse the membrane as a helical segment; that stretch reads IFIAYAIATIFSIPQAILFQM. Residues 187–208 are Extracellular-facing; it reads QEVNEGSGIYDCWVHFEPAWVL. The helical transmembrane segment at 209-229 threads the bilayer; the sequence is TAYALYIFFALYLIPILILFF. At 230-288 the chain is on the cytoplasmic side; that stretch reads TYGSICYTIWAKYRHAIKTKKDANTRYPQRRKKKGVILRTHSVHGFSKAKLNSVKLTFA. Residues 289–309 traverse the membrane as a helical segment; that stretch reads VIVTYIICWSPFFVSQIWWLF. The Extracellular portion of the chain corresponds to 310–319; that stretch reads DETVVGNAGV. A helical transmembrane segment spans residues 320–340; it reads VVILLMACLNSCTNPWIYLIF. Residues 341 to 426 are Cytoplasmic-facing; the sequence is NRNYISNVLP…DQFIYSDKTT (86 aa). A disordered region spans residues 373–426; it reads GSVRRDSRKTSDPKRISESRRISDARRISGKTQKNNSSSPRKTSDQFIYSDKTT. Residues 375–399 are compositionally biased toward basic and acidic residues; sequence VRRDSRKTSDPKRISESRRISDARR. Polar residues predominate over residues 402–426; it reads GKTQKNNSSSPRKTSDQFIYSDKTT.

This sequence belongs to the G-protein coupled receptor 1 family. Vasopressin/oxytocin receptor subfamily. In terms of tissue distribution, present in various peripheral tissues with highest expression in branchia and vas deferens. Very low expression detected in nervous system.

It localises to the cell membrane. Functionally, acts as a receptor for cephalotocin. The protein is Cephalotocin receptor 2 of Octopus vulgaris (Common octopus).